The chain runs to 471 residues: 1,3-beta-glucanosyltransferase GAS4 (471 aa).

Positions methionine 1 to alanine 21 are cleaved as a signal peptide. Cysteine 70 and cysteine 99 are joined by a disulfide. Position 88 (tyrosine 88) interacts with (1,3-beta-D-glucosyl)n. An N-linked (GlcNAc...) asparagine glycan is attached at asparagine 151. Positions 160, 161, 203, and 208 each coordinate (1,3-beta-D-glucosyl)n. Glutamate 161 acts as the Proton donor in catalysis. Intrachain disulfides connect cysteine 217–cysteine 354 and cysteine 238–cysteine 269. Glutamate 266 (nucleophile) is an active-site residue. A (1,3-beta-D-glucosyl)n-binding site is contributed by tyrosine 298. The N-linked (GlcNAc...) asparagine glycan is linked to asparagine 398. The GPI-anchor amidated asparagine moiety is linked to residue asparagine 447. Residues serine 448–phenylalanine 471 constitute a propeptide, removed in mature form.

The protein belongs to the glycosyl hydrolase 72 family.

It is found in the cell membrane. Splits internally a 1,3-beta-glucan molecule and transfers the newly generated reducing end (the donor) to the non-reducing end of another 1,3-beta-glucan molecule (the acceptor) forming a 1,3-beta linkage, resulting in the elongation of 1,3-beta-glucan chains in the cell wall. Involved in spore wall assembly. This is 1,3-beta-glucanosyltransferase GAS4 (GAS4) from Saccharomyces cerevisiae (strain ATCC 204508 / S288c) (Baker's yeast).